The primary structure comprises 747 residues: Zinc finger and BTB domain-containing protein 47 (747 aa).

The BTB domain occupies 15 to 83; sequence CDVDLVLVPQ…IYTSKLLVNA (69 aa). Residue Lys-190 forms a Glycyl lysine isopeptide (Lys-Gly) (interchain with G-Cter in SUMO2) linkage. Residues 243–424 form a disordered region; the sequence is QTLHVSTGPE…ARGPPATDGL (182 aa). Over residues 267–277 the composition is skewed to basic and acidic residues; it reads GREDGLQRHSD. The segment covering 278-354 has biased composition (acidic residues); that stretch reads EEEEDDEEEE…SEEEEGEEGE (77 aa). Residues 380-398 show a composition bias toward basic and acidic residues; that stretch reads RSRENARRRGTPEPEEAGR. The segment at 436–459 adopts a C2H2-type 1 zinc-finger fold; the sequence is HPCQKCPRVFNNRWYLEKHMNVTH. Residues 463–485 form a C2H2-type 2; degenerate zinc finger; that stretch reads QICDQCGKRFLLESELLLHRQTD. 7 consecutive C2H2-type zinc fingers follow at residues 490–513, 520–542, 548–570, 576–598, 604–626, 632–654, and 660–687; these read IQCV…KIVH, FSCE…MVAH, FTCE…SLQH, FRCE…MSIH, FMCQ…MKTH, YICE…RRTH, and YPCD…RVSH. The segment at 694–747 is disordered; sequence VPAAPGLPPTQPQAHALPLLPGLPQTLPPPPHLPPPPPLFPTTASPGGRMNANN. Pro residues predominate over residues 719-733; sequence TLPPPPHLPPPPPLF.

This sequence belongs to the krueppel C2H2-type zinc-finger protein family.

The protein resides in the nucleus. Its function is as follows. May be involved in transcriptional regulation. The chain is Zinc finger and BTB domain-containing protein 47 (ZBTB47) from Homo sapiens (Human).